The primary structure comprises 270 residues: 4-hydroxy-tetrahydrodipicolinate reductase (270 aa).

Residues 11 to 16 (GAGGRM) and E37 each bind NAD(+). R38 serves as a coordination point for NADP(+). Residues 101–103 (GTT) and 125–128 (APNM) contribute to the NAD(+) site. H158 acts as the Proton donor/acceptor in catalysis. H159 serves as a coordination point for (S)-2,3,4,5-tetrahydrodipicolinate. K162 serves as the catalytic Proton donor. 168–169 (GT) is a (S)-2,3,4,5-tetrahydrodipicolinate binding site.

It belongs to the DapB family.

It is found in the cytoplasm. It carries out the reaction (S)-2,3,4,5-tetrahydrodipicolinate + NAD(+) + H2O = (2S,4S)-4-hydroxy-2,3,4,5-tetrahydrodipicolinate + NADH + H(+). The enzyme catalyses (S)-2,3,4,5-tetrahydrodipicolinate + NADP(+) + H2O = (2S,4S)-4-hydroxy-2,3,4,5-tetrahydrodipicolinate + NADPH + H(+). The protein operates within amino-acid biosynthesis; L-lysine biosynthesis via DAP pathway; (S)-tetrahydrodipicolinate from L-aspartate: step 4/4. Catalyzes the conversion of 4-hydroxy-tetrahydrodipicolinate (HTPA) to tetrahydrodipicolinate. The polypeptide is 4-hydroxy-tetrahydrodipicolinate reductase (Shewanella oneidensis (strain ATCC 700550 / JCM 31522 / CIP 106686 / LMG 19005 / NCIMB 14063 / MR-1)).